A 328-amino-acid polypeptide reads, in one-letter code: Sulfate adenylyltransferase subunit 2 (328 aa).

The tract at residues 309–328 (RAIDKDQTASMEKKKQEGYF) is disordered.

It belongs to the PAPS reductase family. CysD subfamily. In terms of assembly, heterodimer composed of CysD, the smaller subunit, and CysN.

It catalyses the reaction sulfate + ATP + H(+) = adenosine 5'-phosphosulfate + diphosphate. The protein operates within sulfur metabolism; hydrogen sulfide biosynthesis; sulfite from sulfate: step 1/3. Functionally, with CysN forms the ATP sulfurylase (ATPS) that catalyzes the adenylation of sulfate producing adenosine 5'-phosphosulfate (APS) and diphosphate, the first enzymatic step in sulfur assimilation pathway. APS synthesis involves the formation of a high-energy phosphoric-sulfuric acid anhydride bond driven by GTP hydrolysis by CysN coupled to ATP hydrolysis by CysD. This Hyphomonas neptunium (strain ATCC 15444) protein is Sulfate adenylyltransferase subunit 2.